We begin with the raw amino-acid sequence, 427 residues long: Serine--tRNA ligase (427 aa).

231–233 serves as a coordination point for L-serine; the sequence is TAE. An ATP-binding site is contributed by 262 to 264; that stretch reads RSE. Residue glutamate 285 coordinates L-serine. 349–352 is an ATP binding site; sequence EISS. Residue serine 385 coordinates L-serine.

This sequence belongs to the class-II aminoacyl-tRNA synthetase family. Type-1 seryl-tRNA synthetase subfamily. As to quaternary structure, homodimer. The tRNA molecule binds across the dimer.

The protein localises to the cytoplasm. The enzyme catalyses tRNA(Ser) + L-serine + ATP = L-seryl-tRNA(Ser) + AMP + diphosphate + H(+). The catalysed reaction is tRNA(Sec) + L-serine + ATP = L-seryl-tRNA(Sec) + AMP + diphosphate + H(+). It functions in the pathway aminoacyl-tRNA biosynthesis; selenocysteinyl-tRNA(Sec) biosynthesis; L-seryl-tRNA(Sec) from L-serine and tRNA(Sec): step 1/1. Functionally, catalyzes the attachment of serine to tRNA(Ser). Is also able to aminoacylate tRNA(Sec) with serine, to form the misacylated tRNA L-seryl-tRNA(Sec), which will be further converted into selenocysteinyl-tRNA(Sec). The polypeptide is Serine--tRNA ligase (Sinorhizobium fredii (strain NBRC 101917 / NGR234)).